A 401-amino-acid polypeptide reads, in one-letter code: MTIFIDLASLEDLYNDLISHIETLRKKKGSEYSVADYQILIGEQRTVEFLSKIVSNETEFLFKECKDSDKDIEGFFNVILTILHKLENEDEINIVSQKIRDSLSAHPTENSQLKIKILTNLFNSFQPKSTQRYDIFFALVKLASDSNNLEFVKYQITDIDSWLEDWNVSIQQKRKLYKLISNIFKEKQRMLSHQFLVKYLQTFTKEDSQEAQEDAVRVCIESISLQELYQSDYLLDLPAVQYLEGSTVSANSLTYELMKIFATEQLDSFLQFQQKNPNFLSTIGLSNDDCLQKIRLLSLATLTSEQSKVPYSLISKMLQIDENEVEMWVINAMEGDLLDAKLDQLNRIVNVNSSTQRVFNKSQWSQLGQRFSVWKSSVKNLLQVIENAKTTQVKPFYFQTR.

The region spanning 188–356 is the PCI domain; the sequence is QRMLSHQFLV…RIVNVNSSTQ (169 aa).

It belongs to the eIF-3 subunit M family. As to quaternary structure, component of the eukaryotic translation initiation factor 3 (eIF-3) complex.

It localises to the cytoplasm. Functionally, component of the eukaryotic translation initiation factor 3 (eIF-3) complex, which is involved in protein synthesis of a specialized repertoire of mRNAs and, together with other initiation factors, stimulates binding of mRNA and methionyl-tRNAi to the 40S ribosome. The eIF-3 complex specifically targets and initiates translation of a subset of mRNAs involved in cell proliferation. This chain is Eukaryotic translation initiation factor 3 subunit M (eif3m), found in Dictyostelium discoideum (Social amoeba).